Reading from the N-terminus, the 471-residue chain is Argininosuccinate lyase (471 aa).

This sequence belongs to the lyase 1 family. Argininosuccinate lyase subfamily.

It localises to the cytoplasm. The enzyme catalyses 2-(N(omega)-L-arginino)succinate = fumarate + L-arginine. Its pathway is amino-acid biosynthesis; L-arginine biosynthesis; L-arginine from L-ornithine and carbamoyl phosphate: step 3/3. The chain is Argininosuccinate lyase from Parasynechococcus marenigrum (strain WH8102).